A 214-amino-acid polypeptide reads, in one-letter code: Osteoclast-stimulating factor 1 (214 aa).

The SH3 domain maps to 12-71 (GQVKVYRALFTFDPRTPDELYFEEGDILYISDTSDSNWWKGTCRGRTGLIPSNYVAEQAE). ANK repeat units follow at residues 72–101 (SIDNPMHEAAKRGNLSWLRECLDNKVGING), 105–135 (AGNTSLYWACHGGHKDVVEILLSQPNCELNQ), and 139–168 (LGDTPLHAAAWKGYSDIVEMLLNKNARTDV).

It is found in the cytoplasm. Functionally, induces bone resorption, acting probably through a signaling cascade which results in the secretion of factor(s) enhancing osteoclast formation and activity. This is Osteoclast-stimulating factor 1 (ostf1) from Danio rerio (Zebrafish).